The primary structure comprises 808 residues: Zinc finger protein 148 (808 aa).

2 disordered regions span residues 15-86 (SPVG…ISQD) and 131-162 (DSLI…SPAK). Residues 56-73 (AEDDDDEDEEEDDDDDLA) are compositionally biased toward acidic residues. Positions 150 to 159 (HKKKKRKQRS) are enriched in basic residues. 4 C2H2-type zinc fingers span residues 180 to 202 (HICE…VFIH), 208 to 230 (FQCN…EKIH), 236 to 258 (FRCD…KRTH), and 264 to 287 (YQCD…RMCH). Disordered regions lie at residues 305-338 (RTPE…ASIT), 596-617 (SINS…QAPP), and 705-736 (SFSG…DPQS). Polar residues-rich tracts occupy residues 705 to 718 (SFSG…SVSP) and 725 to 736 (QVTSPKKTDPQS).

Belongs to the krueppel C2H2-type zinc-finger protein family.

The protein localises to the nucleus. In terms of biological role, involved in transcriptional regulation. Represses the transcription of a number of genes. Required for primitive and definitive hematopoiesis during embryonic development. The protein is Zinc finger protein 148 (znf148) of Danio rerio (Zebrafish).